We begin with the raw amino-acid sequence, 207 residues long: Small ribosomal subunit protein uS4 (207 aa).

Positions 31-51 (KCKLDSKPGQHGRTSGARTSD) are disordered. In terms of domain architecture, S4 RNA-binding spans 97-162 (SRLDNVVYRM…QGRIRESLDL (66 aa)).

It belongs to the universal ribosomal protein uS4 family. In terms of assembly, part of the 30S ribosomal subunit. Contacts protein S5. The interaction surface between S4 and S5 is involved in control of translational fidelity.

Functionally, one of the primary rRNA binding proteins, it binds directly to 16S rRNA where it nucleates assembly of the body of the 30S subunit. With S5 and S12 plays an important role in translational accuracy. In Bordetella bronchiseptica (strain ATCC BAA-588 / NCTC 13252 / RB50) (Alcaligenes bronchisepticus), this protein is Small ribosomal subunit protein uS4.